The sequence spans 402 residues: Imidazolonepropionase (402 aa).

His-66 and His-68 together coordinate Fe(3+). Residues His-66 and His-68 each coordinate Zn(2+). 3 residues coordinate 4-imidazolone-5-propanoate: Arg-75, Tyr-138, and His-171. Residue Tyr-138 participates in N-formimidoyl-L-glutamate binding. His-236 contributes to the Fe(3+) binding site. His-236 contacts Zn(2+). Gln-239 contacts 4-imidazolone-5-propanoate. Asp-311 lines the Fe(3+) pocket. Asp-311 is a Zn(2+) binding site. 2 residues coordinate N-formimidoyl-L-glutamate: Asn-313 and Gly-315. Thr-316 contributes to the 4-imidazolone-5-propanoate binding site.

The protein belongs to the metallo-dependent hydrolases superfamily. HutI family. Zn(2+) serves as cofactor. Fe(3+) is required as a cofactor.

It localises to the cytoplasm. It catalyses the reaction 4-imidazolone-5-propanoate + H2O = N-formimidoyl-L-glutamate. The protein operates within amino-acid degradation; L-histidine degradation into L-glutamate; N-formimidoyl-L-glutamate from L-histidine: step 3/3. Catalyzes the hydrolytic cleavage of the carbon-nitrogen bond in imidazolone-5-propanoate to yield N-formimidoyl-L-glutamate. It is the third step in the universal histidine degradation pathway. The sequence is that of Imidazolonepropionase from Pseudomonas aeruginosa (strain LESB58).